The sequence spans 171 residues: Inosine/xanthosine triphosphatase (171 aa).

8–13 is a binding site for substrate; it reads TTNPAK. Mg(2+)-binding residues include Asp-38 and Gln-68.

This sequence belongs to the YjjX NTPase family. As to quaternary structure, homodimer. Mg(2+) serves as cofactor. It depends on Mn(2+) as a cofactor.

The enzyme catalyses XTP + H2O = XDP + phosphate + H(+). It carries out the reaction ITP + H2O = IDP + phosphate + H(+). Phosphatase that hydrolyzes non-canonical purine nucleotides such as XTP and ITP to their respective diphosphate derivatives. Probably excludes non-canonical purines from DNA/RNA precursor pool, thus preventing their incorporation into DNA/RNA and avoiding chromosomal lesions. This is Inosine/xanthosine triphosphatase from Cronobacter sakazakii (strain ATCC BAA-894) (Enterobacter sakazakii).